We begin with the raw amino-acid sequence, 322 residues long: Pilin gene-inverting protein (322 aa).

May be the site-specific invertase required for pilin gene inversion. Moraxella can express either a Q or I pilin; the inversion of 2 kb of DNA determines which pilin is expressed. In Moraxella bovis, this protein is Pilin gene-inverting protein (piv).